The chain runs to 216 residues: ATP phosphoribosyltransferase (216 aa).

Belongs to the ATP phosphoribosyltransferase family. Short subfamily. Heteromultimer composed of HisG and HisZ subunits.

It is found in the cytoplasm. It catalyses the reaction 1-(5-phospho-beta-D-ribosyl)-ATP + diphosphate = 5-phospho-alpha-D-ribose 1-diphosphate + ATP. It functions in the pathway amino-acid biosynthesis; L-histidine biosynthesis; L-histidine from 5-phospho-alpha-D-ribose 1-diphosphate: step 1/9. Its function is as follows. Catalyzes the condensation of ATP and 5-phosphoribose 1-diphosphate to form N'-(5'-phosphoribosyl)-ATP (PR-ATP). Has a crucial role in the pathway because the rate of histidine biosynthesis seems to be controlled primarily by regulation of HisG enzymatic activity. This chain is ATP phosphoribosyltransferase, found in Prochlorococcus marinus (strain MIT 9211).